The primary structure comprises 257 residues: MLLGVNIDHIAVLRQARMVNDPDLLEAAFIVARHGDQITLHVREDRRHAQDFDLENIIKFCKSPVNLECALNDEILNLALKLKPHRVTLVPEKREELTTEGGLCLNHAKLKQSIEKLQNANIEVSLFINPSLEDIEKSKILKAQFIELHTGHYANLHNALFSNISHTAFALKELDQDKKTLQAQFEKELQNLELCAKKGLELGLKVAAGHGLNYKNVKPVVKIKEICELNIGQSIVARSVFTGLQNAILEMKELIKR.

N6 provides a ligand contact to 3-amino-2-oxopropyl phosphate. Position 8–9 (D8–H9) interacts with 1-deoxy-D-xylulose 5-phosphate. R17 is a binding site for 3-amino-2-oxopropyl phosphate. The Proton acceptor role is filled by H41. R43 and H48 together coordinate 1-deoxy-D-xylulose 5-phosphate. E68 functions as the Proton acceptor in the catalytic mechanism. T98 is a 1-deoxy-D-xylulose 5-phosphate binding site. H210 serves as the catalytic Proton donor. 3-amino-2-oxopropyl phosphate contacts are provided by residues G211 and G232 to Q233.

This sequence belongs to the PNP synthase family. In terms of assembly, homooctamer; tetramer of dimers.

The protein resides in the cytoplasm. It carries out the reaction 3-amino-2-oxopropyl phosphate + 1-deoxy-D-xylulose 5-phosphate = pyridoxine 5'-phosphate + phosphate + 2 H2O + H(+). Its pathway is cofactor biosynthesis; pyridoxine 5'-phosphate biosynthesis; pyridoxine 5'-phosphate from D-erythrose 4-phosphate: step 5/5. Functionally, catalyzes the complicated ring closure reaction between the two acyclic compounds 1-deoxy-D-xylulose-5-phosphate (DXP) and 3-amino-2-oxopropyl phosphate (1-amino-acetone-3-phosphate or AAP) to form pyridoxine 5'-phosphate (PNP) and inorganic phosphate. This Campylobacter jejuni subsp. jejuni serotype O:2 (strain ATCC 700819 / NCTC 11168) protein is Pyridoxine 5'-phosphate synthase.